A 286-amino-acid chain; its full sequence is Beta-lactamase SHV-2 (286 aa).

The first 21 residues, methionine 1–alanine 21, serve as a signal peptide directing secretion. Catalysis depends on serine 66, which acts as the Acyl-ester intermediate. An intrachain disulfide couples cysteine 73 to cysteine 119. The active-site Proton acceptor is the glutamate 164. Lysine 230–glycine 232 provides a ligand contact to substrate.

The protein belongs to the class-A beta-lactamase family.

The enzyme catalyses a beta-lactam + H2O = a substituted beta-amino acid. Functionally, this enzyme hydrolyzes cefotaxime, ceftazidime and other broad spectrum cephalosporins. The polypeptide is Beta-lactamase SHV-2 (bla) (Klebsiella pneumoniae).